The primary structure comprises 164 residues: Ribosome-binding factor A (164 aa).

Belongs to the RbfA family. In terms of assembly, monomer. Binds 30S ribosomal subunits, but not 50S ribosomal subunits or 70S ribosomes.

It localises to the cytoplasm. Its function is as follows. One of several proteins that assist in the late maturation steps of the functional core of the 30S ribosomal subunit. Associates with free 30S ribosomal subunits (but not with 30S subunits that are part of 70S ribosomes or polysomes). Required for efficient processing of 16S rRNA. May interact with the 5'-terminal helix region of 16S rRNA. The protein is Ribosome-binding factor A of Mycobacterium leprae (strain Br4923).